The following is a 299-amino-acid chain: Acetaldehyde dehydrogenase (299 aa).

Position 11–14 (11–14 (SGNI)) interacts with NAD(+). The Acyl-thioester intermediate role is filled by cysteine 126. NAD(+) is bound by residues 157–165 (SAGPGTRAN) and asparagine 267.

This sequence belongs to the acetaldehyde dehydrogenase family.

The catalysed reaction is acetaldehyde + NAD(+) + CoA = acetyl-CoA + NADH + H(+). The protein is Acetaldehyde dehydrogenase of Bacillus thuringiensis (strain Al Hakam).